A 238-amino-acid chain; its full sequence is Ribosomal RNA small subunit methyltransferase G (238 aa).

S-adenosyl-L-methionine is bound by residues Gly77, Phe82, 128–129, and Arg147; that span reads AE.

This sequence belongs to the methyltransferase superfamily. RNA methyltransferase RsmG family.

It localises to the cytoplasm. In terms of biological role, specifically methylates the N7 position of guanine in position 535 of 16S rRNA. The protein is Ribosomal RNA small subunit methyltransferase G of Geobacillus kaustophilus (strain HTA426).